Consider the following 385-residue polypeptide: Probable tRNA sulfurtransferase (385 aa).

Residues 65–165 (AILQELFSFL…KEHFLVFTER (101 aa)) form the THUMP domain. ATP is bound by residues 183–184 (LL), 208–209 (TF), R267, G285, and Q294.

It belongs to the ThiI family.

The protein resides in the cytoplasm. The catalysed reaction is [ThiI sulfur-carrier protein]-S-sulfanyl-L-cysteine + a uridine in tRNA + 2 reduced [2Fe-2S]-[ferredoxin] + ATP + H(+) = [ThiI sulfur-carrier protein]-L-cysteine + a 4-thiouridine in tRNA + 2 oxidized [2Fe-2S]-[ferredoxin] + AMP + diphosphate. It carries out the reaction [ThiS sulfur-carrier protein]-C-terminal Gly-Gly-AMP + S-sulfanyl-L-cysteinyl-[cysteine desulfurase] + AH2 = [ThiS sulfur-carrier protein]-C-terminal-Gly-aminoethanethioate + L-cysteinyl-[cysteine desulfurase] + A + AMP + 2 H(+). Its pathway is cofactor biosynthesis; thiamine diphosphate biosynthesis. Catalyzes the ATP-dependent transfer of a sulfur to tRNA to produce 4-thiouridine in position 8 of tRNAs, which functions as a near-UV photosensor. Also catalyzes the transfer of sulfur to the sulfur carrier protein ThiS, forming ThiS-thiocarboxylate. This is a step in the synthesis of thiazole, in the thiamine biosynthesis pathway. The sulfur is donated as persulfide by IscS. This is Probable tRNA sulfurtransferase from Mycoplasma genitalium (strain ATCC 33530 / DSM 19775 / NCTC 10195 / G37) (Mycoplasmoides genitalium).